A 502-amino-acid polypeptide reads, in one-letter code: Probable mitochondrial-processing peptidase subunit alpha (502 aa).

This sequence belongs to the peptidase M16 family. As to quaternary structure, heterodimer of mas2 (alpha) and mas1 (beta) subunits, forming the mitochondrial processing protease (MPP) in which mas2 is involved in substrate recognition and binding and mas1 is the catalytic subunit.

The protein resides in the mitochondrion matrix. In terms of biological role, substrate recognition and binding subunit of the essential mitochondrial processing protease (MPP), which cleaves the mitochondrial sequence off newly imported precursors proteins. This Schizosaccharomyces pombe (strain 972 / ATCC 24843) (Fission yeast) protein is Probable mitochondrial-processing peptidase subunit alpha (mas2).